A 588-amino-acid chain; its full sequence is Aspartate--tRNA ligase (588 aa).

Glu-172 contributes to the L-aspartate binding site. Residues 196-199 (QLFK) form an aspartate region. Arg-218 contacts L-aspartate. ATP-binding positions include 218-220 (RDE) and Gln-227. Residue His-449 coordinates L-aspartate. Glu-483 contacts ATP. Arg-490 contributes to the L-aspartate binding site. Residue 535–538 (GLDR) participates in ATP binding.

It belongs to the class-II aminoacyl-tRNA synthetase family. Type 1 subfamily. In terms of assembly, homodimer.

The protein localises to the cytoplasm. The enzyme catalyses tRNA(Asp) + L-aspartate + ATP = L-aspartyl-tRNA(Asp) + AMP + diphosphate. Its function is as follows. Catalyzes the attachment of L-aspartate to tRNA(Asp) in a two-step reaction: L-aspartate is first activated by ATP to form Asp-AMP and then transferred to the acceptor end of tRNA(Asp). This chain is Aspartate--tRNA ligase, found in Haemophilus influenzae (strain ATCC 51907 / DSM 11121 / KW20 / Rd).